We begin with the raw amino-acid sequence, 206 residues long: Protein GET1 (206 aa).

Over 1 to 4 the chain is Lumenal; it reads MPSL. The helical transmembrane segment at 5-24 threads the bilayer; the sequence is LITILLLNIVIYVINTIGAA. Over 25–110 the chain is Cytoplasmic; sequence TIDSLLWLFY…SFDMTVKSVR (86 aa). Positions 42–99 form a coiled coil; it reads SHMAREQRRLKREVIQLKREMNATSSQDEFAKWAKLRRRHDKALETYEAKNNELTQCK. The helical transmembrane segment at 111 to 131 threads the bilayer; that stretch reads WAATSGLMLFLQFWYSKRPIF. Residues 132–155 are Lumenal-facing; the sequence is TLPPGWIPWQVQWVLSFPRAPMGT. The helical transmembrane segment at 156–172 threads the bilayer; sequence VSIQIWGGACATVVALV. Topologically, residues 173 to 206 are cytoplasmic; sequence GDAVGATMGFVSASKKEGMKVGAGVGEKEGKKSQ.

This sequence belongs to the WRB/GET1 family. In terms of assembly, interacts with GET3.

The protein localises to the endoplasmic reticulum membrane. In terms of biological role, required for the post-translational delivery of tail-anchored (TA) proteins to the endoplasmic reticulum. Acts as a membrane receptor for soluble GET3, which recognizes and selectively binds the transmembrane domain of TA proteins in the cytosol. This Ajellomyces dermatitidis (strain ER-3 / ATCC MYA-2586) (Blastomyces dermatitidis) protein is Protein GET1.